A 103-amino-acid chain; its full sequence is RNA-binding protein Hfq (103 aa).

Residues 9-68 (DPFLNALRRERVPVSIYLVNGIKLQGQIESFDQFVILLKNTVSQMVYKHAISTVVPSRPV) form the Sm domain. Residues 63–103 (VPSRPVSHHSNNAGGGTGSNFHHGSNAQGSSAPAQDSDETE) form a disordered region. The segment covering 81 to 96 (SNFHHGSNAQGSSAPA) has biased composition (polar residues).

This sequence belongs to the Hfq family. As to quaternary structure, homohexamer.

Functionally, RNA chaperone that binds small regulatory RNA (sRNAs) and mRNAs to facilitate mRNA translational regulation in response to envelope stress, environmental stress and changes in metabolite concentrations. Also binds with high specificity to tRNAs. This chain is RNA-binding protein Hfq, found in Enterobacter sp. (strain 638).